A 196-amino-acid polypeptide reads, in one-letter code: Flagellin B2 (196 aa).

The propeptide occupies 1–12 (MFEFITDEDERG).

This sequence belongs to the archaeal flagellin family. Post-translationally, glycosylated.

It is found in the archaeal flagellum. In terms of biological role, flagellin is the subunit protein which polymerizes to form the filaments of archaeal flagella. The sequence is that of Flagellin B2 (flaB2) from Halobacterium salinarum (strain ATCC 700922 / JCM 11081 / NRC-1) (Halobacterium halobium).